Consider the following 265-residue polypeptide: Mlc titration factor A (265 aa).

Zn(2+) contacts are provided by His111, His148, His152, and Glu211.

The protein belongs to the MtfA family. As to quaternary structure, interacts with Mlc. The cofactor is Zn(2+).

Its subcellular location is the cytoplasm. Its function is as follows. Involved in the modulation of the activity of the glucose-phosphotransferase system (glucose-PTS). Interacts with the transcriptional repressor Mlc, preventing its interaction with DNA and leading to the modulation of expression of genes regulated by Mlc, including ptsG, which encodes the PTS system glucose-specific EIICB component. In terms of biological role, shows zinc-dependent metallopeptidase activity. This chain is Mlc titration factor A, found in Escherichia coli O9:H4 (strain HS).